Reading from the N-terminus, the 546-residue chain is Phosphomethylpyrimidine synthase (546 aa).

Substrate is bound by residues asparagine 145, methionine 174, tyrosine 203, histidine 239, 259–261 (SRG), 300–303 (DGLR), and glutamate 339. Position 343 (histidine 343) interacts with Zn(2+). Tyrosine 366 contributes to the substrate binding site. Histidine 407 is a binding site for Zn(2+). [4Fe-4S] cluster-binding residues include cysteine 487, cysteine 490, and cysteine 495.

Belongs to the ThiC family. [4Fe-4S] cluster is required as a cofactor.

It carries out the reaction 5-amino-1-(5-phospho-beta-D-ribosyl)imidazole + S-adenosyl-L-methionine = 4-amino-2-methyl-5-(phosphooxymethyl)pyrimidine + CO + 5'-deoxyadenosine + formate + L-methionine + 3 H(+). It participates in cofactor biosynthesis; thiamine diphosphate biosynthesis. Catalyzes the synthesis of the hydroxymethylpyrimidine phosphate (HMP-P) moiety of thiamine from aminoimidazole ribotide (AIR) in a radical S-adenosyl-L-methionine (SAM)-dependent reaction. This chain is Phosphomethylpyrimidine synthase, found in Mycobacterium marinum (strain ATCC BAA-535 / M).